The following is a 167-amino-acid chain: Outer envelope pore protein 21A, chloroplastic (167 aa).

The Cytoplasmic portion of the chain corresponds to 1–21 (METSLRYATNSRSLKIHAKEK). A beta stranded membrane pass occupies residues 22–31 (FPVNSKTRLQ). The Chloroplast intermembrane portion of the chain corresponds to 32 to 55 (LHGELDTGAGVPSYFCAMIRYFFH). A beta stranded membrane pass occupies residues 56–65 (EASTNLGVGL). Residues 66–71 (HYDKRE) are Cytoplasmic-facing. The beta stranded transmembrane segment at 72 to 81 (KLRCLVRGKK) threads the bilayer. The Chloroplast intermembrane segment spans residues 82-87 (KFPVIT). A beta stranded transmembrane segment spans residues 88 to 97 (DEVVTFNIKG). The Cytoplasmic portion of the chain corresponds to 98 to 110 (RCDFDQDLVQRNA). The beta stranded transmembrane segment at 111–120 (KGAAEFDWNI) threads the bilayer. At 121-127 (WKFQKDQ) the chain is on the chloroplast intermembrane side. The beta stranded transmembrane segment at 128–137 (DLRLRIGYEM) threads the bilayer. The Cytoplasmic segment spans residues 138–142 (FEKVP). A beta stranded membrane pass occupies residues 143-152 (YMQIRENNWT). The Chloroplast intermembrane portion of the chain corresponds to 153 to 158 (FNTNLK). The beta stranded transmembrane segment at 159-167 (GKWNVRYDL) threads the bilayer.

Belongs to the plastid outer envelope porin OEP21 (TC 1.B.29) family.

The protein resides in the plastid. Its subcellular location is the etioplast membrane. The protein localises to the chloroplast outer membrane. Its function is as follows. Voltage-dependent rectifying anion channel that facilitates the translocation between chloroplast and cytoplasm of phosphorylated carbohydrates such as triosephosphate, 3-phosphoglycerate and inorganic phosphate (Pi) depending of ATP to triosephosphate ratio in the plastidial intermembrane space; in high triosephosphate/ATP conditions (e.g. photosynthesis), export of triosphosphate from chloroplast (outward rectifying channels), but in high ATP/triosephosphate conditions (e.g. dark phase), import of phosphosolutes (inward rectifying channels). The polypeptide is Outer envelope pore protein 21A, chloroplastic (OEP21A) (Arabidopsis thaliana (Mouse-ear cress)).